The sequence spans 213 residues: Probable thiopurine S-methyltransferase (213 aa).

S-adenosyl-L-methionine is bound by residues Trp-10, Leu-45, Glu-66, and Arg-125.

Belongs to the class I-like SAM-binding methyltransferase superfamily. TPMT family.

Its subcellular location is the cytoplasm. It catalyses the reaction S-adenosyl-L-methionine + a thiopurine = S-adenosyl-L-homocysteine + a thiopurine S-methylether.. The polypeptide is Probable thiopurine S-methyltransferase (Yarrowia lipolytica (strain CLIB 122 / E 150) (Yeast)).